The following is a 550-amino-acid chain: C-type lectin domain family 4 member F (550 aa).

At 1 to 42 (MKEAELNRDVAKFCTDNQCVILQPQGLGPKSAAPMAPRTLRH) the chain is on the cytoplasmic side. A helical; Signal-anchor for type II membrane protein membrane pass occupies residues 43-69 (VQAIVALVVVTVFFSLLALFVVVLQPW). The Extracellular segment spans residues 70–550 (RQKQNEDHPV…DWSVARTDQS (481 aa)). Asparagine 87, asparagine 93, asparagine 115, asparagine 132, asparagine 209, and asparagine 255 each carry an N-linked (GlcNAc...) asparagine glycan. Residues 438–538 (NFCVSQGAHL…GTAYNWVCKK (101 aa)) enclose the C-type lectin domain. Intrachain disulfides connect cysteine 440–cysteine 536 and cysteine 516–cysteine 528.

Kupffer cells.

Its subcellular location is the membrane. Its function is as follows. Receptor with an affinity for galactose and fucose. Could be involved in endocytosis. The chain is C-type lectin domain family 4 member F (Clec4f) from Rattus norvegicus (Rat).